The chain runs to 248 residues: Tyrosine recombinase XerD-like (248 aa).

One can recognise a Core-binding (CB) domain in the interval 1-72 (MIAFIEPFLA…TVNQFLYYLY (72 aa)). Positions 92–248 (SLKPQLTRLD…PITLEKYYKM (157 aa)) constitute a Tyr recombinase domain. Residue R213 is part of the active site. Y245 serves as the catalytic O-(3'-phospho-DNA)-tyrosine intermediate.

The protein belongs to the 'phage' integrase family. XerD-like subfamily.

It is found in the cytoplasm. Putative tyrosine recombinase. Not involved in the cutting and rejoining of the recombining DNA molecules on dif(SL) site. The protein is Tyrosine recombinase XerD-like of Streptococcus equi subsp. zooepidemicus (strain MGCS10565).